We begin with the raw amino-acid sequence, 304 residues long: Killer cell immunoglobulin-like receptor 2DS4 (304 aa).

An N-terminal signal peptide occupies residues 1-21; sequence MSLMVIIMACVGFFLLQGAWP. Residues 22 to 245 lie on the Extracellular side of the membrane; it reads QEGVHRKPSF…SKTGNPRHLH (224 aa). Ig-like C2-type domains follow at residues 42 to 107 and 142 to 205; these read EETV…VPHS and GENV…FRDA. Cysteine 49 and cysteine 100 form a disulfide bridge. Residues asparagine 67, asparagine 84, asparagine 144, asparagine 178, and asparagine 211 are each glycosylated (N-linked (GlcNAc...) asparagine). Cysteine 149 and cysteine 198 form a disulfide bridge. A disordered region spans residues 220-239; that stretch reads VTGNPSNSWPSPTEPSSKTG. Residues 246-265 form a helical membrane-spanning segment; that stretch reads VLIGTSVVKIPFTILLFFLL. Over 266–304 the chain is Cytoplasmic; that stretch reads HRWCSDKKNAAVMDQEPAGNRTVNSEDSDEQDHQEVSYA. Residues 280-304 are disordered; the sequence is QEPAGNRTVNSEDSDEQDHQEVSYA.

This sequence belongs to the immunoglobulin superfamily. As to quaternary structure, interacts with HLA-F; this interaction is direct.

Its subcellular location is the cell membrane. Its function is as follows. Receptor on natural killer (NK) cells for HLA-C alleles. Does not inhibit the activity of NK cells. This is Killer cell immunoglobulin-like receptor 2DS4 from Homo sapiens (Human).